Here is a 1458-residue protein sequence, read N- to C-terminus: GTPase-activating protein and VPS9 domain-containing protein 1 (1458 aa).

A Ras-GAP domain is found at 147 to 385 (SYLLQVLRYL…AAFLDVVIGG (239 aa)). A Phosphoserine modification is found at Ser-227. Residues Thr-390 and Thr-458 each carry the phosphothreonine modification. The interval 447–475 (AKPGKSSSLDMTPYSTPQMSPATTPANKK) is disordered. Polar residues predominate over residues 451-473 (KSSSLDMTPYSTPQMSPATTPAN). Tyr-460 carries the phosphotyrosine modification. Position 466 is a phosphoserine (Ser-466). The residue at position 470 (Thr-470) is a Phosphothreonine. Residues Ser-566 and Ser-569 each carry the phosphoserine modification. Disordered stretches follow at residues 574 to 608 (GISEGPSNRSNSVSSLDLEGESVSELGAGPSGSNG), 738 to 821 (LESC…PSQS), and 846 to 867 (HYARPSHPPPDPPILEGAVGGN). Residues 578–588 (GPSNRSNSVSS) show a composition bias toward polar residues. Phosphoserine is present on residues Ser-742, Ser-746, and Ser-757. Residues 758–777 (SRPSTPGLSVVSGISATSED) are compositionally biased toward polar residues. Thr-762 is subject to Phosphothreonine. Ser-766 carries the post-translational modification Phosphoserine. Over residues 778–789 (IPNKIEDLRSEC) the composition is skewed to basic and acidic residues. 5 positions are modified to phosphoserine: Ser-876, Ser-902, Ser-903, Ser-908, and Ser-914. The segment covering 888–902 (KQRHSYPERLVRSRS) has biased composition (basic and acidic residues). Disordered stretches follow at residues 888 to 1022 (KQRH…RLSA) and 1039 to 1072 (KRTSPSEGAMANDESAEVMGDGESAHDSPREEAL). Positions 930–951 (AAATGATSLVAAPHSSSSSPSK) are enriched in low complexity. Basic and acidic residues-rich tracts occupy residues 952 to 973 (DSSRGETEERKDSDDERSDRSR) and 995 to 1006 (EKQEKDKDDLGP). Position 964 is a phosphoserine (Ser-964). Over residues 1010–1022 (STLTDEPSPRLSA) the composition is skewed to polar residues. Phosphoserine is present on residues Ser-1017 and Ser-1044. A compositionally biased stretch (basic and acidic residues) spans 1061-1071 (ESAHDSPREEA). Phosphoserine occurs at positions 1076 and 1083. The 141-residue stretch at 1318–1458 (ILRDQVLHEH…EFIKTIDDRK (141 aa)) folds into the VPS9 domain.

It belongs to the GAPVD1 family. As to quaternary structure, interacts with RAB5A. Interacts with TRIP10/CIP4. As to expression, present in adipocytes and fibroblasts (at protein level). Ubiquitously expressed.

The protein resides in the membrane. It localises to the endosome. In terms of biological role, acts both as a GTPase-activating protein (GAP) and a guanine nucleotide exchange factor (GEF), and participates in various processes such as endocytosis, insulin receptor internalization or LC2A4/GLUT4 trafficking. Acts as a GEF for the Ras-related protein RAB31 by exchanging bound GDP for free GTP, leading to regulate LC2A4/GLUT4 trafficking. In the absence of insulin, it maintains RAB31 in an active state and promotes a futile cycle between LC2A4/GLUT4 storage vesicles and early endosomes, retaining LC2A4/GLUT4 inside the cells. Upon insulin stimulation, it is translocated to the plasma membrane, releasing LC2A4/GLUT4 from intracellular storage vesicles. Also involved in EGFR trafficking and degradation, possibly by promoting EGFR ubiquitination and subsequent degradation by the proteasome. Has GEF activity for Rab5 and GAP activity for Ras. In Mus musculus (Mouse), this protein is GTPase-activating protein and VPS9 domain-containing protein 1 (Gapvd1).